The chain runs to 423 residues: Putative RING-H2 finger protein ATL49 (423 aa).

A helical membrane pass occupies residues 43–63 (ILLIIIILSIIFFISGLLHIL). The RING-type; atypical zinc finger occupies 126–168 (CPVCLCEFETEDKLRLLPKCSHAFHVECIDTWLLSHSTCPLCR). Disordered stretches follow at residues 213 to 236 (NNDS…DMDG) and 377 to 399 (HRIP…KTPS). A compositionally biased stretch (basic and acidic residues) spans 379–389 (IPPEESLKSEN).

The protein belongs to the RING-type zinc finger family. ATL subfamily.

The protein localises to the membrane. It carries out the reaction S-ubiquitinyl-[E2 ubiquitin-conjugating enzyme]-L-cysteine + [acceptor protein]-L-lysine = [E2 ubiquitin-conjugating enzyme]-L-cysteine + N(6)-ubiquitinyl-[acceptor protein]-L-lysine.. Its pathway is protein modification; protein ubiquitination. Its function is as follows. May be involved in female gametophyte development. This is Putative RING-H2 finger protein ATL49 (ATL49) from Arabidopsis thaliana (Mouse-ear cress).